We begin with the raw amino-acid sequence, 620 residues long: Chaperone protein HscA homolog (620 aa).

The protein belongs to the heat shock protein 70 family.

Its function is as follows. Chaperone involved in the maturation of iron-sulfur cluster-containing proteins. Has a low intrinsic ATPase activity which is markedly stimulated by HscB. This chain is Chaperone protein HscA homolog, found in Paracidovorax citrulli (strain AAC00-1) (Acidovorax citrulli).